Consider the following 580-residue polypeptide: mRNA cap guanine-N(7) methyltransferase (580 aa).

Polar residues-rich tracts occupy residues 1–17 (MSGS…TSLI) and 25–53 (EATS…NSDL). The interval 1-222 (MSGSKQGSEK…PVEAQPYSRL (222 aa)) is disordered. Residues 54–67 (KVTENKPKNTEMKP) are compositionally biased toward basic and acidic residues. Residues 69 to 90 (DPNTNASTTENTPITTSNAQVS) are compositionally biased toward polar residues. The segment covering 102 to 154 (REPEEAQNRYDRYVPRVDNRRRGEPRVAEVRQDPRYAKYLRQDQEERRIRRPD) has biased composition (basic and acidic residues). Acidic residues predominate over residues 191-214 (ESEENGDEQQGDDEEETPGNEEPV). The 309-residue stretch at 271–579 (SPIYKLRNFN…FYLGFAFEKL (309 aa)) folds into the mRNA cap 0 methyltransferase domain. Residue 280-281 (NN) coordinates mRNA. S-adenosyl-L-methionine-binding residues include lysine 284, cysteine 308, aspartate 330, aspartate 376, glutamine 406, and tyrosine 411.

This sequence belongs to the class I-like SAM-binding methyltransferase superfamily. mRNA cap 0 methyltransferase family.

The protein resides in the nucleus. The enzyme catalyses a 5'-end (5'-triphosphoguanosine)-ribonucleoside in mRNA + S-adenosyl-L-methionine = a 5'-end (N(7)-methyl 5'-triphosphoguanosine)-ribonucleoside in mRNA + S-adenosyl-L-homocysteine. In terms of biological role, responsible for methylating the 5'-cap structure of mRNAs. The sequence is that of mRNA cap guanine-N(7) methyltransferase (ABD1) from Meyerozyma guilliermondii (strain ATCC 6260 / CBS 566 / DSM 6381 / JCM 1539 / NBRC 10279 / NRRL Y-324) (Yeast).